Here is a 44-residue protein sequence, read N- to C-terminus: Photosystem I reaction center subunit IX (44 aa).

A helical membrane pass occupies residues 7–27 (YLSVAPVLATLWFGSLAGLLI).

It belongs to the PsaJ family.

The protein localises to the plastid. It localises to the chloroplast thylakoid membrane. Its function is as follows. May help in the organization of the PsaE and PsaF subunits. The sequence is that of Photosystem I reaction center subunit IX from Illicium oligandrum (Star anise).